A 179-amino-acid chain; its full sequence is Signal peptidase complex subunit 2 (179 aa).

At 1–48 the chain is on the cytoplasmic side; that stretch reads MSGNNVQEEDSTFHVSNLYSETEIKKITQDFISEKIREQNFEEIVKYS. The chain crosses the membrane as a helical span at residues 49–69; that stretch reads NIRIFLSLVLIVIGTYCSIFV. At 70–74 the chain is on the extracellular side; sequence QYKKN. Residues 75–95 form a helical membrane-spanning segment; the sequence is PVIMIQLLVAFFVVSTTLIIF. At 96-179 the chain is on the cytoplasmic side; the sequence is EYFFFDDVFM…AHGRTLKLKN (84 aa).

This sequence belongs to the SPCS2 family. As to quaternary structure, component of the signal peptidase complex (SPC) composed of a catalytic subunit SEC11/SPC21 and three accessory subunits SPC25, SPC3/SPC22, SPC1/SPC12. The complex induces a local thinning of the ER membrane which is used to measure the length of the signal peptide (SP) h-region of protein substrates. This ensures the selectivity of the complex towards h-regions shorter than 18-20 amino acids. Within the complex, interacts with SEC11/SPC21. Component of a complex composed of SPC25 and PMV; the interaction is mediated via the transmembrane domains. The complex interacts with the SEC61 channel-forming translocon complex and is involved in the recognition and import of PEXEL motif-containing proteins into the ER for subsequent export.

It localises to the endoplasmic reticulum membrane. Its function is as follows. Component of the signal peptidase complex (SPC) which catalyzes the cleavage of N-terminal signal sequences from nascent proteins as they are translocated into the lumen of the endoplasmic reticulum. Enhances the enzymatic activity of SPC and facilitates the interactions between different components of the translocation site. Also, regulatory component of the CSP25-plasmepsin PMV complex which cleaves the pentameric localization motif RxLxE/Q/D (termed Plasmodium export element (PEXEL)) located downstream of the N-terminal secretory signal sequence of several proteins. In Plasmodium falciparum (isolate 3D7), this protein is Signal peptidase complex subunit 2.